A 488-amino-acid chain; its full sequence is 3-octaprenyl-4-hydroxybenzoate carboxy-lyase (488 aa).

N172 contributes to the Mn(2+) binding site. Prenylated FMN-binding positions include 175-177 (IYR), 189-191 (RWL), and 194-195 (RG). E238 serves as a coordination point for Mn(2+). Catalysis depends on D287, which acts as the Proton donor.

This sequence belongs to the UbiD family. As to quaternary structure, homohexamer. It depends on prenylated FMN as a cofactor. Mn(2+) serves as cofactor.

It localises to the cell membrane. It catalyses the reaction a 4-hydroxy-3-(all-trans-polyprenyl)benzoate + H(+) = a 2-(all-trans-polyprenyl)phenol + CO2. Its pathway is cofactor biosynthesis; ubiquinone biosynthesis. Its function is as follows. Catalyzes the decarboxylation of 3-octaprenyl-4-hydroxy benzoate to 2-octaprenylphenol, an intermediate step in ubiquinone biosynthesis. This is 3-octaprenyl-4-hydroxybenzoate carboxy-lyase from Hahella chejuensis (strain KCTC 2396).